Reading from the N-terminus, the 78-residue chain is Large ribosomal subunit protein bL28 (78 aa).

Residues 1–25 (MARVCQVTGKRPMSGHHVSHANNKT) form a disordered region. The span at 13–25 (MSGHHVSHANNKT) shows a compositional bias: basic residues.

It belongs to the bacterial ribosomal protein bL28 family.

The polypeptide is Large ribosomal subunit protein bL28 (Nitrosomonas eutropha (strain DSM 101675 / C91 / Nm57)).